A 172-amino-acid chain; its full sequence is Small ribosomal subunit protein uS5 (172 aa).

In terms of domain architecture, S5 DRBM spans 11–74; the sequence is LFESVVDIAR…RKAKGAMIRF (64 aa).

Belongs to the universal ribosomal protein uS5 family. As to quaternary structure, part of the 30S ribosomal subunit. Contacts proteins S4 and S8.

In terms of biological role, with S4 and S12 plays an important role in translational accuracy. Functionally, located at the back of the 30S subunit body where it stabilizes the conformation of the head with respect to the body. The polypeptide is Small ribosomal subunit protein uS5 (Neorickettsia sennetsu (strain ATCC VR-367 / Miyayama) (Ehrlichia sennetsu)).